The following is a 289-amino-acid chain: tRNA acetyltransferase TAN1 (289 aa).

Over residues 1–10 the composition is skewed to basic and acidic residues; that stretch reads MGEKRNRNGK. 2 disordered regions span residues 1-31 and 64-83; these read MGEK…DPGT and DIKE…LSIE. Serine 72 carries the phosphoserine modification. Residues 146–259 form the THUMP domain; that stretch reads ADPKNMVKRT…KSNIGMCVVD (114 aa).

Its subcellular location is the cytoplasm. The protein resides in the nucleus. Probable tRNA acetyltransferase required for the formation of the modified nucleoside N(4)-acetylcytidine in serine and leucine tRNAs. Binds RNA. In Saccharomyces cerevisiae (strain ATCC 204508 / S288c) (Baker's yeast), this protein is tRNA acetyltransferase TAN1 (TAN1).